The primary structure comprises 60 residues: MPRLKVTQVRSGIGGTAEQRDTLRSLGLKRLRDTVVKEDRPEIRGMIRAVAHLVRVEEVE.

Belongs to the universal ribosomal protein uL30 family. In terms of assembly, part of the 50S ribosomal subunit.

This chain is Large ribosomal subunit protein uL30, found in Acidothermus cellulolyticus (strain ATCC 43068 / DSM 8971 / 11B).